Here is a 355-residue protein sequence, read N- to C-terminus: Peptide chain release factor 1 (355 aa).

Q231 is modified (N5-methylglutamine).

It belongs to the prokaryotic/mitochondrial release factor family. In terms of processing, methylated by PrmC. Methylation increases the termination efficiency of RF1.

It localises to the cytoplasm. Its function is as follows. Peptide chain release factor 1 directs the termination of translation in response to the peptide chain termination codons UAG and UAA. In Nautilia profundicola (strain ATCC BAA-1463 / DSM 18972 / AmH), this protein is Peptide chain release factor 1.